Here is a 721-residue protein sequence, read N- to C-terminus: Dipeptidyl-peptidase 5 (721 aa).

Positions 1–18 (MGAFRWLSIAAAASTALA) are cleaved as a signal peptide. 4 N-linked (GlcNAc...) asparagine glycosylation sites follow: asparagine 75, asparagine 94, asparagine 151, and asparagine 254. Residues 271–297 (ARPINGPDSPGTPKGIKGDSSSPVFSP) are disordered. 2 N-linked (GlcNAc...) asparagine glycosylation sites follow: asparagine 380 and asparagine 450. Serine 560 functions as the Charge relay system in the catalytic mechanism. N-linked (GlcNAc...) asparagine glycosylation is present at asparagine 607. Active-site charge relay system residues include aspartate 643 and histidine 675.

Belongs to the peptidase S9C family. Post-translationally, N-glycosylated. Expressed in mycelia and conidia.

It is found in the secreted. May be involved in metabolism of dipeptides or may affect host defense mechanisms. Has a substrate specificity limited to the hydrolysis of X-Ala, His-Ser, and Ser-Tyr dipeptides at a neutral pH optimum. This Aspergillus fumigatus (strain ATCC MYA-4609 / CBS 101355 / FGSC A1100 / Af293) (Neosartorya fumigata) protein is Dipeptidyl-peptidase 5.